The chain runs to 90 residues: UPF0335 protein RPA4190 (90 aa).

The protein belongs to the UPF0335 family.

The chain is UPF0335 protein RPA4190 from Rhodopseudomonas palustris (strain ATCC BAA-98 / CGA009).